We begin with the raw amino-acid sequence, 342 residues long: AM-toxin biosynthesis protein 12 (342 aa).

A signal peptide spans 1-20 (MSLLITSLAWGALLDPEVSS).

It functions in the pathway mycotoxin biosynthesis. Its function is as follows. Part of the gene clusters that mediate the biosynthesis of AM-toxins, host-selective toxins (HSTs) causing Alternaria blotch on apple, a worldwide distributed disease. AM-toxins are cyclic depsipeptides containing the 3 residues 2-hydroxy-isovaleric acid (2-HIV), dehydroalanine, L-alanine which are common for all 3 AM-toxins I to III. The fourth precursor is L-alpha-amino-methoxyphenyl-valeric acid (L-Amv) for AM-toxin I, L-alpha-amino-phenyl-valeric acid (L-Apv) for AM-toxin II, and L-alpha-amino-hydroxyphenyl-valeric acid (L-Ahv) for AM-toxin III. AM-toxins have two target sites for affecting susceptible apple cells; they cause invagination of the plasma membrane and electrolyte loss and chloroplast disorganization. The non-ribosomal peptide synthetase AMT1 contains 4 catalytic modules and is responsible for activation of each residue in AM-toxin. The aldo-keto reductase AMT2 catalyzes the conversion of 2-keto-isovaleric acid (2-KIV) to 2-hydroxy-isovaleric acid (2-HIV), one of the precursor residues incorporated by AMT1 during AM-toxin biosynthesis, by reduction of its ketone to an alcohol. The cytochrome P450 monooxygenase AMT3 and the thioesterase AMT4 are also important for AM-toxin production, but their exact function within the AM-toxin biosynthesis are not known yet. Up to 21 proteins (including AMT1 to AMT4) are predicted to be involved in AM-toxin biosynthesis since their expression ishighly up-regulated in AM-toxin-producing cultures. The polypeptide is AM-toxin biosynthesis protein 12 (Alternaria alternata (Alternaria rot fungus)).